The chain runs to 640 residues: WW domain-binding protein 11 (640 aa).

Positions 1–11 are enriched in polar residues; the sequence is MGRRSTSSTKS. The disordered stretch occupies residues 1 to 37; that stretch reads MGRRSTSSTKSGKFMNPTDQARKEARKRELKKNKKQR. The span at 28–37 shows a compositional bias: basic residues; the sequence is RELKKNKKQR. Positions 75-122 form a coiled coil; it reads EKVLRDKRKKLRETFERIVRLYERENPETYKELRKLELEYETKRGQLS. Disordered regions lie at residues 155-174, 187-563, and 582-625; these read DIPL…SALG, VPRL…ISAK, and RVRR…LKTK. Over residues 194–207 the composition is skewed to pro residues; it reads RKPPGPPPGPPPPQ. The span at 230-240 shows a compositional bias: basic and acidic residues; the sequence is DGGRDSDSKSE. Residues 241-251 show a composition bias toward acidic residues; that stretch reads ADEESDSQEDS. Basic and acidic residues predominate over residues 252–274; that stretch reads SAEREDSDRGERDEERERADKHT. Ser285 carries the phosphoserine modification. A compositionally biased stretch (acidic residues) spans 315 to 338; it reads PEEEEEDEEEEYSESEDSEAEDQA. Over residues 356–371 the composition is skewed to low complexity; sequence APMAAQQPPSLMQAPP. Pro residues-rich tracts occupy residues 372–412 and 422–491; these read ITGP…PPGL and RLLP…PPLN. The PGR signature appears at 421–432; that stretch reads PRLLPPGPPPGR. Gly residues predominate over residues 547–558; sequence GSGGASAQGGGA. Over residues 586 to 599 the composition is skewed to basic and acidic residues; that stretch reads DRAGGTGRREEERP. A compositionally biased stretch (low complexity) spans 603 to 616; that stretch reads QQTPAHQAPPIAHA.

It is found in the cytoplasm. It localises to the nucleus. In terms of biological role, activates pre-mRNA splicing. This is WW domain-binding protein 11 (wbp11) from Danio rerio (Zebrafish).